The following is a 258-amino-acid chain: Synapse differentiation-inducing gene protein 1 (258 aa).

The Cytoplasmic segment spans residues 1-181; the sequence is MDGIVEQKSV…NFLMMPPRDH (181 aa). Phosphoserine is present on S137. A helical transmembrane segment spans residues 182-202; that stretch reads LGLSVFSMLCCFWPLGIAAFY. Residues 203–228 are Extracellular-facing; the sequence is LSHETNKAVAKGDFHQASTSSRRALF. The helical intramembrane region spans 229 to 249; that stretch reads LAVLSITIGTGIYVGVAVALI. Topologically, residues 250–258 are extracellular; the sequence is AYLSKNNHL.

It belongs to the CD225/Dispanin family. In terms of assembly, homodimer. Interacts with GRIA1 and GRIA2. As to expression, enriched in the cerebellum and also expressed in the neocortex and modestly in the hippocampus (at protein level). Expressed in hippocampal neurons, both in cell body and neurites, however its presence is enriched at excitatory synapses and also found in postsynaptic cells.

The protein localises to the cell membrane. The protein resides in the early endosome membrane. It localises to the postsynaptic density membrane. Its subcellular location is the synapse. It is found in the cell projection. The protein localises to the dendrite. The protein resides in the dendritic spine. May regulate AMPA receptor content at nascent synapses, and have a role in postsynaptic development and maturation. This is Synapse differentiation-inducing gene protein 1 (Syndig1) from Rattus norvegicus (Rat).